The following is a 145-amino-acid chain: D-aminoacyl-tRNA deacylase (145 aa).

The short motif at Gly137 to Pro138 is the Gly-cisPro motif, important for rejection of L-amino acids element.

This sequence belongs to the DTD family. As to quaternary structure, homodimer.

The protein resides in the cytoplasm. The catalysed reaction is glycyl-tRNA(Ala) + H2O = tRNA(Ala) + glycine + H(+). It carries out the reaction a D-aminoacyl-tRNA + H2O = a tRNA + a D-alpha-amino acid + H(+). Functionally, an aminoacyl-tRNA editing enzyme that deacylates mischarged D-aminoacyl-tRNAs. Also deacylates mischarged glycyl-tRNA(Ala), protecting cells against glycine mischarging by AlaRS. Acts via tRNA-based rather than protein-based catalysis; rejects L-amino acids rather than detecting D-amino acids in the active site. By recycling D-aminoacyl-tRNA to D-amino acids and free tRNA molecules, this enzyme counteracts the toxicity associated with the formation of D-aminoacyl-tRNA entities in vivo and helps enforce protein L-homochirality. The protein is D-aminoacyl-tRNA deacylase of Pseudomonas paraeruginosa (strain DSM 24068 / PA7) (Pseudomonas aeruginosa (strain PA7)).